We begin with the raw amino-acid sequence, 170 residues long: Helix-loop-helix protein 3 (170 aa).

Over residues 1 to 26 the composition is skewed to low complexity; sequence MTASTSSTPSTSTKIPSSSKSSVTKQ. Disordered stretches follow at residues 1 to 42 and 118 to 170; these read MTAS…VDQV and TPSP…TETY. The segment at 26–39 is basic motif; degenerate; it reads QTKQKRNERERKRV. Residues 26–79 enclose the bHLH domain; that stretch reads QTKQKRNERERKRVDQVNQGFVLLQERVPKAAGNKAKLSKVETLREAARYIQEL. Positions 30–40 are enriched in basic and acidic residues; sequence KRNERERKRVD. The tract at residues 40-79 is helix-loop-helix motif; sequence DQVNQGFVLLQERVPKAAGNKAKLSKVETLREAARYIQEL. Residues 143–157 show a composition bias toward low complexity; the sequence is SHYYQESSSSSASTS.

As to quaternary structure, efficient DNA binding requires dimerization with another bHLH protein. Forms a heterodimer with hlh-2. Expressed in the ADL sensory neurons.

It localises to the nucleus. Probable transcriptional regulator. May mediate transcriptional activation by binding to the E-box motif 5'-CANNTG-3'. Plays a role in the differentiation of the hermaphrodite-specific motor neurons (HSN) that are required for normal egg laying. Might play a role in serotonin production by regulating expression of the tryptophan hydrolase tph-1 which catalyzes serotonin synthesis, in the HSN neurons. Also plays a role in HSN axon guidance towards the vulva and the ventral nerve cord, possibly by promoting the expression of the netrin receptor unc-40. Under feeding conditions, involved in the regulation of the srh-234 chemoreceptor encoding gene expression in the ADL sensory neurons. Together with hlh-2, involved in the induction of programmed cell death in the sister cells of the serotonergic neurosecretory motor (NSM) neurons, probably through the activation of egl-1 transcription. In Caenorhabditis elegans, this protein is Helix-loop-helix protein 3.